The chain runs to 329 residues: Ubiquitin carboxyl-terminal hydrolase isozyme L5 (329 aa).

The 219-residue stretch at 7–225 (EWCLMESDPG…IRFNLMAIVS (219 aa)) folds into the UCH catalytic domain. The residue at position 47 (Lys-47) is an N6-succinyllysine. The Nucleophile role is filled by Cys-88. Lys-158 bears the N6-acetyllysine mark. His-164 functions as the Proton donor in the catalytic mechanism. Lys-289 is subject to N6-succinyllysine. The region spanning 291–319 (NYLPFIMELLKTLAEHQQLIPLVEKAKEK) is the ULD domain. Residues 313–329 (VEKAKEKQNAKKAQETK) are interaction with ADRM1.

Belongs to the peptidase C12 family. Component of the 19S (PA700) regulatory complex of the 26S proteasome. Interacts with ADRM1 and NFRKB. Component of the INO80 complex; specifically part of a complex module associated with N-terminus of INO80.

The protein resides in the cytoplasm. The protein localises to the nucleus. It catalyses the reaction Thiol-dependent hydrolysis of ester, thioester, amide, peptide and isopeptide bonds formed by the C-terminal Gly of ubiquitin (a 76-residue protein attached to proteins as an intracellular targeting signal).. Activated by ADRM1. Inhibited by interaction with NFRKB. In terms of biological role, protease that specifically cleaves 'Lys-48'-linked polyubiquitin chains. Deubiquitinating enzyme associated with the 19S regulatory subunit of the 26S proteasome. Putative regulatory component of the INO80 complex; however is inactive in the INO80 complex and is activated by a transient interaction of the INO80 complex with the proteasome via ADRM1. This chain is Ubiquitin carboxyl-terminal hydrolase isozyme L5 (UCHL5), found in Sus scrofa (Pig).